The sequence spans 578 residues: Zinc finger protein with KRAB and SCAN domains 8 (578 aa).

The disordered stretch occupies residues 1-20; it reads MAEESRKPSAPSPPDQTPEE. A Phosphoserine modification is found at Ser-12. Lys-26 is covalently cross-linked (Glycyl lysine isopeptide (Lys-Gly) (interchain with G-Cter in SUMO2)). The SCAN box domain maps to 51 to 133; the sequence is RLRFRQLRYQ…TLLEDLERQI (83 aa). The disordered stretch occupies residues 158 to 205; sequence ASAPEPPNTQLQSEATQHKSPVPQESQERAMSTSQSPTRSQKGSSGDQ. Positions 165 to 205 are enriched in polar residues; that stretch reads NTQLQSEATQHKSPVPQESQERAMSTSQSPTRSQKGSSGDQ. Residues Lys-176 and Lys-199 each participate in a glycyl lysine isopeptide (Lys-Gly) (interchain with G-Cter in SUMO2) cross-link. A Phosphoserine modification is found at Ser-201. A KRAB domain is found at 220-316; it reads EKIEDMAVSL…GRLERQRGNP (97 aa). Residues Lys-221, Lys-272, and Lys-288 each participate in a glycyl lysine isopeptide (Lys-Gly) (interchain with G-Cter in SUMO2) cross-link. C2H2-type zinc fingers lie at residues 322–344 and 350–372; these read HKCD…WRIH and YQCN…QDIH. Glycyl lysine isopeptide (Lys-Gly) (interchain with G-Cter in SUMO2) cross-links involve residues Lys-374 and Lys-376. 7 consecutive C2H2-type zinc fingers follow at residues 378–400, 406–428, 434–456, 462–484, 490–512, 518–540, and 546–568; these read YHCK…QRIH, YQCN…QRIH, YECN…QRIH, YECD…QRSH, YKCN…QRIH, and YKCK…LRIH. Glycyl lysine isopeptide (Lys-Gly) (interchain with G-Cter in SUMO2) cross-links involve residues Lys-413 and Lys-441. Residue Lys-502 forms a Glycyl lysine isopeptide (Lys-Gly) (interchain with G-Cter in SUMO2) linkage. Residue Lys-572 forms a Glycyl lysine isopeptide (Lys-Gly) (interchain with G-Cter in SUMO2) linkage.

The protein belongs to the krueppel C2H2-type zinc-finger protein family.

The protein resides in the nucleus. May be involved in transcriptional regulation. This is Zinc finger protein with KRAB and SCAN domains 8 (ZKSCAN8) from Homo sapiens (Human).